The chain runs to 302 residues: UDP-N-acetylenolpyruvoylglucosamine reductase (302 aa).

Positions 29-192 (KVGGPVDLLA…VAVTLQLSED (164 aa)) constitute an FAD-binding PCMH-type domain. Arginine 172 is a catalytic residue. The active-site Proton donor is serine 221. Glutamate 291 is a catalytic residue.

Belongs to the MurB family. It depends on FAD as a cofactor.

It is found in the cytoplasm. It catalyses the reaction UDP-N-acetyl-alpha-D-muramate + NADP(+) = UDP-N-acetyl-3-O-(1-carboxyvinyl)-alpha-D-glucosamine + NADPH + H(+). Its pathway is cell wall biogenesis; peptidoglycan biosynthesis. Functionally, cell wall formation. This chain is UDP-N-acetylenolpyruvoylglucosamine reductase, found in Trichlorobacter lovleyi (strain ATCC BAA-1151 / DSM 17278 / SZ) (Geobacter lovleyi).